Consider the following 229-residue polypeptide: 3,4-dihydroxy-2-butanone 4-phosphate synthase (229 aa).

D-ribulose 5-phosphate is bound by residues 28–29, aspartate 33, 164–168, and glutamate 188; these read RE and RGGHT. Glutamate 29 lines the Mg(2+) pocket. Histidine 167 is a Mg(2+) binding site.

This sequence belongs to the DHBP synthase family. Homodimer. It depends on Mg(2+) as a cofactor. Requires Mn(2+) as cofactor.

The catalysed reaction is D-ribulose 5-phosphate = (2S)-2-hydroxy-3-oxobutyl phosphate + formate + H(+). It participates in cofactor biosynthesis; riboflavin biosynthesis; 2-hydroxy-3-oxobutyl phosphate from D-ribulose 5-phosphate: step 1/1. Catalyzes the conversion of D-ribulose 5-phosphate to formate and 3,4-dihydroxy-2-butanone 4-phosphate. The chain is 3,4-dihydroxy-2-butanone 4-phosphate synthase from Methanothermobacter thermautotrophicus (strain ATCC 29096 / DSM 1053 / JCM 10044 / NBRC 100330 / Delta H) (Methanobacterium thermoautotrophicum).